The primary structure comprises 227 residues: Large ribosomal subunit protein uL3 (227 aa).

The disordered stretch occupies residues 129 to 154 (GMQPVSHGQSDRTRSRGSSGAQGPQK).

The protein belongs to the universal ribosomal protein uL3 family. As to quaternary structure, part of the 50S ribosomal subunit. Forms a cluster with proteins L14 and L19.

In terms of biological role, one of the primary rRNA binding proteins, it binds directly near the 3'-end of the 23S rRNA, where it nucleates assembly of the 50S subunit. This chain is Large ribosomal subunit protein uL3, found in Endomicrobium trichonymphae.